The sequence spans 331 residues: Olfactory receptor 6S1 (331 aa).

Topologically, residues 1–29 are extracellular; it reads MSPDGNHSSDPTEFVLAGLPNLNSARVEL. N-linked (GlcNAc...) asparagine glycosylation occurs at asparagine 6. Residues 30 to 50 form a helical membrane-spanning segment; it reads FSVFLLVYLLNLTGNVLIVGV. Topologically, residues 51-59 are cytoplasmic; the sequence is VRADTRLQT. The chain crosses the membrane as a helical span at residues 60 to 80; the sequence is PMYFFLGNLSCLEILLTSVII. The Extracellular portion of the chain corresponds to 81–99; it reads PKMLSNFLSRQHTISFAAC. A disulfide bridge links cysteine 99 with cysteine 182. The chain crosses the membrane as a helical span at residues 100–120; it reads ITQFYFYFFLGASEFLLLAVM. The Cytoplasmic segment spans residues 121 to 147; that stretch reads SADRYLAICHPLRYPLLMSGAVCFRVA. The chain crosses the membrane as a helical span at residues 148 to 168; that stretch reads LACWVGGLVPVLGPTVAVALL. At 169–207 the chain is on the extracellular side; it reads PFCKQGAVVQHFFCDSGPLLRLACTNTKKLEETDFVLAS. A helical membrane pass occupies residues 208–228; the sequence is LVIVSSLLITAVSYGLIVLAV. At 229-242 the chain is on the cytoplasmic side; sequence LSIPSASGRQKAFS. A helical membrane pass occupies residues 243–263; sequence TCTSHLIVVTLFYGSAIFLYV. Residues 264 to 274 lie on the Extracellular side of the membrane; the sequence is RPSQSGSVDTN. The helical transmembrane segment at 275–295 threads the bilayer; it reads WAVTVITTFVTPLLNPFIYAL. Over 296-331 the chain is Cytoplasmic; that stretch reads RNEQVKEALKDMFRKVVAGVLGNLLLDKCLSEKAVK.

Belongs to the G-protein coupled receptor 1 family.

It is found in the cell membrane. Functionally, odorant receptor. This Homo sapiens (Human) protein is Olfactory receptor 6S1 (OR6S1).